An 87-amino-acid polypeptide reads, in one-letter code: Small ribosomal subunit protein bS20 (87 aa).

Positions 1–25 (MANSAQARKRARQNISHRNRNMSLR) are disordered. Residues 7–20 (ARKRARQNISHRNR) show a composition bias toward basic residues.

It belongs to the bacterial ribosomal protein bS20 family.

Functionally, binds directly to 16S ribosomal RNA. The polypeptide is Small ribosomal subunit protein bS20 (Nitrosospira multiformis (strain ATCC 25196 / NCIMB 11849 / C 71)).